The primary structure comprises 61 residues: Small ribosomal subunit protein uS14 (61 aa).

4 residues coordinate Zn(2+): C24, C27, C40, and C43.

Belongs to the universal ribosomal protein uS14 family. Zinc-binding uS14 subfamily. In terms of assembly, part of the 30S ribosomal subunit. Contacts proteins S3 and S10. Zn(2+) is required as a cofactor.

Binds 16S rRNA, required for the assembly of 30S particles and may also be responsible for determining the conformation of the 16S rRNA at the A site. In Maridesulfovibrio salexigens (strain ATCC 14822 / DSM 2638 / NCIMB 8403 / VKM B-1763) (Desulfovibrio salexigens), this protein is Small ribosomal subunit protein uS14.